The sequence spans 803 residues: MGLIFQPLFWQYVATSYALMVLGFLDETVEKAIKSEGYCSRILRAQGGTRKEGYNEFSMRVEGDPEFYKPGNTYRVTILAVSPAYFRGFTLIALKEGKEGEKEEDHAGSFQIIDEEDTQFMSNCPVAVTESTPRRRTRIQVFWTAPSIGTGCVILKASIVQKKIIYFQDEGSLTKRMCELDLTLEGGNEKTIPDCCACGTAKYRLTFYGNWSEKAHPKDYPRRANHWSAIIGGSHSGEYVLWEYGQASDGVKQVAELGSPVKMEEEIRQKGDEVLTVIKAKAQWPAWQPLNVRAAPSAEFSVDRSRHLMSFLAMMGPSPDWNVGLTSEDLCTKECGWVQKVVQDLIPWDAGTDSGVTYESPNKPTIPQDKIRPLTSLDHPQSPSMTRGGPIIPIARVVIERIARKGEQCNIIPDNVDDIVADLVTEEKDEDDTPETCIYSNWSPWSACSSATCDKGKRMRQRMLKAQLDLSVPCPDTQDFEPCMGPGCSDDEASTCMMSEWITWSPCSASCGMGIEVRERYVKQFPEDGSLCKVPTEETEKCIVNEECEPSSCIVTEWAEWEECSATCRMGMKKRHRMIKMTPADGSMCKADTTEVEKCMMPECHTIPCVLSPWSEWSDCSVTCGKGTRTRQRMLKSPSELGDCNEELELKQVEKCMLPECPISCELTEWSYWSECNKSCGKGHMIRTRMITMEPQFGGAVCPETVQRKKCRLRKCQKSSGNERRHLKDAREKRRSEKIKEDSDGEQYPVCKMKPWTAWTECTKFCGGGIQERFMTVKKRFKSSQFTSCKDKKEIRACNVHPC.

The first 23 residues, 1-23 (MGLIFQPLFWQYVATSYALMVLG), serve as a signal peptide directing secretion. The region spanning 24–190 (FLDETVEKAI…DLTLEGGNEK (167 aa)) is the Reelin domain. Cystine bridges form between Cys-39–Cys-124, Cys-152–Cys-178, Cys-195–Cys-331, Cys-196–Cys-335, Cys-198–Cys-409, Cys-437–Cys-474, Cys-448–Cys-483, Cys-453–Cys-488, Cys-496–Cys-532, Cys-507–Cys-511, Cys-542–Cys-548, Cys-553–Cys-589, Cys-564–Cys-568, and Cys-599–Cys-604. Residues 191-383 (TIPDCCACGT…LTSLDHPQSP (193 aa)) form the Spondin domain. Asn-210 carries an N-linked (GlcNAc...) asparagine glycan. 3 residues coordinate Ca(2+): Asp-320, Asp-349, and Asp-353. The segment at 353-389 (DSGVTYESPNKPTIPQDKIRPLTSLDHPQSPSMTRGG) is disordered. Polar residues predominate over residues 354–365 (SGVTYESPNKPT). TSP type-1 domains follow at residues 436–489 (TCIY…PGCS), 495–549 (TCMM…EECE), 552–605 (SCIV…PECH), 608–662 (PCVL…PECP), and 664–717 (SCEL…RKCQ). Asn-677 carries an N-linked (GlcNAc...) asparagine glycan. The disordered stretch occupies residues 722–741 (NERRHLKDAREKRRSEKIKE). In terms of domain architecture, TSP type-1 6 spans 750–802 (VCKMKPWTAWTECTKFCGGGIQERFMTVKKRFKSSQFTSCKDKKEIRACNVHP).

In terms of tissue distribution, expressed at high levels in the floor plate.

The protein localises to the secreted. The protein resides in the extracellular space. It localises to the extracellular matrix. Functionally, promotes the attachment of spinal cord and sensory neuron cells and the outgrowth of neurites in vitro. May contribute to the growth and guidance of axons in both the spinal cord and the PNS. The sequence is that of Spondin-1 (spon1) from Xenopus laevis (African clawed frog).